The sequence spans 164 residues: SsrA-binding protein (164 aa).

Residues 143 to 164 are disordered; the sequence is HDKRQDEKQKSIKKEINSVLKR. Residues 145–158 show a composition bias toward basic and acidic residues; that stretch reads KRQDEKQKSIKKEI.

The protein belongs to the SmpB family.

Its subcellular location is the cytoplasm. In terms of biological role, required for rescue of stalled ribosomes mediated by trans-translation. Binds to transfer-messenger RNA (tmRNA), required for stable association of tmRNA with ribosomes. tmRNA and SmpB together mimic tRNA shape, replacing the anticodon stem-loop with SmpB. tmRNA is encoded by the ssrA gene; the 2 termini fold to resemble tRNA(Ala) and it encodes a 'tag peptide', a short internal open reading frame. During trans-translation Ala-aminoacylated tmRNA acts like a tRNA, entering the A-site of stalled ribosomes, displacing the stalled mRNA. The ribosome then switches to translate the ORF on the tmRNA; the nascent peptide is terminated with the 'tag peptide' encoded by the tmRNA and targeted for degradation. The ribosome is freed to recommence translation, which seems to be the essential function of trans-translation. This chain is SsrA-binding protein, found in Prochlorococcus marinus (strain MIT 9312).